Consider the following 70-residue polypeptide: Small ribosomal subunit protein bS21 (70 aa).

The protein belongs to the bacterial ribosomal protein bS21 family.

The polypeptide is Small ribosomal subunit protein bS21 (rpsU) (Helicobacter pylori (strain J99 / ATCC 700824) (Campylobacter pylori J99)).